Here is a 1690-residue protein sequence, read N- to C-terminus: DNA-directed RNA polymerase subunit beta' (1690 aa).

Residues C63, C65, C78, and C81 each coordinate Zn(2+). The Mg(2+) site is built by D753, D755, and D757. Positions 1107, 1295, 1302, and 1305 each coordinate Zn(2+).

Belongs to the RNA polymerase beta' chain family. In terms of assembly, the RNAP catalytic core consists of 2 alpha, 1 beta, 1 beta' and 1 omega subunit. When a sigma factor is associated with the core the holoenzyme is formed, which can initiate transcription. Requires Mg(2+) as cofactor. Zn(2+) serves as cofactor.

It carries out the reaction RNA(n) + a ribonucleoside 5'-triphosphate = RNA(n+1) + diphosphate. Its function is as follows. DNA-dependent RNA polymerase catalyzes the transcription of DNA into RNA using the four ribonucleoside triphosphates as substrates. This chain is DNA-directed RNA polymerase subunit beta', found in Thermotoga neapolitana (strain ATCC 49049 / DSM 4359 / NBRC 107923 / NS-E).